Reading from the N-terminus, the 498-residue chain is Cytochrome P450 6B1 (498 aa).

Cys443 lines the heme pocket.

It belongs to the cytochrome P450 family. Heme serves as cofactor. In terms of tissue distribution, midgut microsome.

Its subcellular location is the endoplasmic reticulum membrane. It is found in the microsome membrane. The enzyme catalyses an organic molecule + reduced [NADPH--hemoprotein reductase] + O2 = an alcohol + oxidized [NADPH--hemoprotein reductase] + H2O + H(+). In terms of biological role, enables the insect to feed on furanocoumarin-producing plants and evolved as an adaptation for detoxification of xanthotoxin and other furanocoumarins. The sequence is that of Cytochrome P450 6B1 (CYP6B1) from Papilio polyxenes (Black swallowtail butterfly).